The chain runs to 96 residues: Small ribosomal subunit protein bS18 (96 aa).

The protein belongs to the bacterial ribosomal protein bS18 family. In terms of assembly, part of the 30S ribosomal subunit. Forms a tight heterodimer with protein bS6.

Binds as a heterodimer with protein bS6 to the central domain of the 16S rRNA, where it helps stabilize the platform of the 30S subunit. The sequence is that of Small ribosomal subunit protein bS18 from Gluconobacter oxydans (strain 621H) (Gluconobacter suboxydans).